Reading from the N-terminus, the 139-residue chain is Cystatin-11 (139 aa).

The signal sequence occupies residues 1–28; that stretch reads MMARLWKTTWFLLAILVALVAFSYQVKR. Disulfide bonds link Cys94-Cys102 and Cys115-Cys135. N-linked (GlcNAc...) asparagine glycosylation is present at Asn134.

This sequence belongs to the cystatin family.

It is found in the secreted. In terms of biological role, has antibacterial activity against the Gram-negative bacteria E.coli. May play a role in sperm maturation and fertilization. In Rattus norvegicus (Rat), this protein is Cystatin-11 (Cst11).